A 465-amino-acid polypeptide reads, in one-letter code: MLMLWTFAVLLGAVAGREVCFDKLGCFSDDAPWSGTLDRPLKALPWSPAQINTRFLLYTNENPDNYQLITSDASNIRNSNFRTNRKTRIIIHGFIDKGEENWLSDMCKNMFRVESVNCICVDWKGGSRTTYTQATQNVRVVGAEVALLVNVLQSDLGYSLNNVHLIGHSLGSHIAGEAGKRTFGAIGRITGLDPAEPYFQGTPEEVRLDPTDAQFVDAIHTDAGPIIPNLGFGMSQTVGHLDFFPNGGIEMPGCQKNILSQIVDIDGIWEGTRNFAACNHLRSYKFYTDSIVNPTGFAGFSCSSYSLFTANKCFPCGSGGCPQMGHYADRYPGKTSRLYQTFYLNTGDKSNFARWRYQVTVTLSGQKVTGHILVSLFGNGGNSKQYEVFKGSLQPGTSHVNEFDSDVDVGDLQKVKFIWYNNVINPTLPKVGASRITVERNDGRVFNFCSQETVREDVLLTLSPC.

Positions 1 to 16 (MLMLWTFAVLLGAVAG) are cleaved as a signal peptide. 2 disulfide bridges follow: cysteine 20–cysteine 26 and cysteine 107–cysteine 118. Residue serine 169 is the Nucleophile of the active site. Residue aspartate 193 is the Charge relay system of the active site. Residues glutamate 204, arginine 207, aspartate 209, and aspartate 212 each coordinate Ca(2+). A disulfide bond links cysteine 254 and cysteine 278. The Charge relay system role is filled by histidine 280. Intrachain disulfides connect cysteine 302-cysteine 313, cysteine 316-cysteine 321, and cysteine 449-cysteine 465. In terms of domain architecture, PLAT spans 355–465 (WRYQVTVTLS…EDVLLTLSPC (111 aa)).

This sequence belongs to the AB hydrolase superfamily. Lipase family. In terms of assembly, forms a 1:1 stoichiometric complex with (pro)colipase/CLPS. In terms of tissue distribution, pancreas.

The protein localises to the secreted. It carries out the reaction a triacylglycerol + H2O = a diacylglycerol + a fatty acid + H(+). The catalysed reaction is 1,2,3-tri-(9Z-octadecenoyl)-glycerol + H2O = di-(9Z)-octadecenoylglycerol + (9Z)-octadecenoate + H(+). The enzyme catalyses 1,2,3-tributanoylglycerol + H2O = dibutanoylglycerol + butanoate + H(+). It catalyses the reaction all-trans-retinyl hexadecanoate + H2O = all-trans-retinol + hexadecanoate + H(+). It carries out the reaction 1,2-di-(9Z-octadecenoyl)-glycerol + H2O = (9Z-octadecenoyl)-glycerol + (9Z)-octadecenoate + H(+). With respect to regulation, inhibited by bile salts, is reactivated by (pro)colipase/CLPS. Functionally, plays an important role in fat metabolism. It preferentially splits the esters of long-chain fatty acids at positions 1 and 3, producing mainly 2-monoacylglycerol and free fatty acids, and shows considerably higher activity against insoluble emulsified substrates than against soluble ones. The chain is Pancreatic triacylglycerol lipase from Mus musculus (Mouse).